Here is a 591-residue protein sequence, read N- to C-terminus: Acyl-CoA-dependent acyltransferase MAC1 (591 aa).

The segment at 589-591 (ARL) is peroxisomal targeting signal type 1.

The protein belongs to the trichothecene O-acetyltransferase family.

Its subcellular location is the peroxisome. It participates in secondary metabolite biosynthesis. Acyl-CoA-dependent acyltransferase; part of the gene cluster that mediates the biosynthesis of mannosylerythritol lipids (MELs), surface-active substances that enhance the availability of water-insoluble substrates. Mannosylerythritol lipid production is responsible for hemolytic activity of Ustilago maydis. Depending on the number of acetyl groups, mannosylerythritol lipids can be differentiated into MEL A (fully acetylated), MEL B and MEL C (monoacetylated at R-6 and R-4, respectively), and the fully deacetylated MEL D. The first step in the pathway is the generation of mannosylerythritol by the glycosyltransferase EMT1 which catalyzes the transfer of GDP-mannose to the C-4 atom of meso-erythritol. This reaction has to be stereospecific, since only mannosyl-D-erythritol is generated. The produced disaccharide is subsequently acylated with fatty acids of various lengths derived from the peroxisomal beta-oxidation by the peroxisomal acyltransferases MAC1 and MAC2 at positions C-2 and C-3, repectively. The existence of MEL derivatives which carry an acetyl group at C-2 implies that at least MAC1 also accepts acetyl-CoA as a donor. The final step of MEL biosynthesis is the acetylation of the fully acylated mannosylerythritol lipids catalyzed by the acetyl-CoA-dependent acetyltransferase MAT1. MAT1 displays a relaxed regioselectivity and is able to transfer acetylgroups to both positions C-4 and C-6 of the mannosyl moiety. In Mycosarcoma maydis (Corn smut fungus), this protein is Acyl-CoA-dependent acyltransferase MAC1.